We begin with the raw amino-acid sequence, 440 residues long: L-seryl-tRNA(Sec) selenium transferase (440 aa).

Lys282 carries the N6-(pyridoxal phosphate)lysine modification.

The protein belongs to the SelA family. The cofactor is pyridoxal 5'-phosphate.

The protein resides in the cytoplasm. The catalysed reaction is L-seryl-tRNA(Sec) + selenophosphate + H(+) = L-selenocysteinyl-tRNA(Sec) + phosphate. The protein operates within aminoacyl-tRNA biosynthesis; selenocysteinyl-tRNA(Sec) biosynthesis; selenocysteinyl-tRNA(Sec) from L-seryl-tRNA(Sec) (bacterial route): step 1/1. Its function is as follows. Converts seryl-tRNA(Sec) to selenocysteinyl-tRNA(Sec) required for selenoprotein biosynthesis. In Campylobacter jejuni subsp. jejuni serotype O:2 (strain ATCC 700819 / NCTC 11168), this protein is L-seryl-tRNA(Sec) selenium transferase.